The sequence spans 1392 residues: DNA-directed RNA polymerase subunit beta (1392 aa).

It belongs to the RNA polymerase beta chain family. The RNAP catalytic core consists of 2 alpha, 1 beta, 1 beta' and 1 omega subunit. When a sigma factor is associated with the core the holoenzyme is formed, which can initiate transcription.

The catalysed reaction is RNA(n) + a ribonucleoside 5'-triphosphate = RNA(n+1) + diphosphate. Its function is as follows. DNA-dependent RNA polymerase catalyzes the transcription of DNA into RNA using the four ribonucleoside triphosphates as substrates. The protein is DNA-directed RNA polymerase subunit beta of Neisseria meningitidis serogroup B (strain ATCC BAA-335 / MC58).